Reading from the N-terminus, the 131-residue chain is Small ribosomal subunit protein eS8 (131 aa).

Positions 1-37 (MKLGAFYKGGDLKKPSGGKKRRVRRTKKKALGGGPPQ) are disordered. Residues 16 to 30 (SGGKKRRVRRTKKKA) show a composition bias toward basic residues.

It belongs to the eukaryotic ribosomal protein eS8 family. Part of the 30S ribosomal subunit.

This Pyrobaculum neutrophilum (strain DSM 2338 / JCM 9278 / NBRC 100436 / V24Sta) (Thermoproteus neutrophilus) protein is Small ribosomal subunit protein eS8.